The chain runs to 302 residues: Paired immunoglobulin-like type 2 receptor alpha (302 aa).

A signal peptide spans 1–31; that stretch reads MALLISLPGGTPAMAQILLLLSSACLHAGNS. The Extracellular portion of the chain corresponds to 32 to 198; the sequence is ERSNRKNGFG…GGLDLQTTVG (167 aa). 2 N-linked (GlcNAc...) asparagine glycosylation sites follow: asparagine 90 and asparagine 107. A helical membrane pass occupies residues 199-219; the sequence is LATAAAVFLVGVLGLIVFLWW. Residues 220 to 302 are Cytoplasmic-facing; that stretch reads KRRRQGQKTK…ETVYSIVKAK (83 aa). The segment covering 228-248 has biased composition (basic and acidic residues); that stretch reads TKAEIPAREPLETSEKHESVG. A disordered region spans residues 228–293; the sequence is TKAEIPAREP…LPVHGNPQEE (66 aa). 2 consecutive short sequence motifs (ITIM motif) follow at residues 265–270 and 294–299; these read IVYASI and TVYSIV. Positions 270-280 are enriched in polar residues; it reads ISLSSPTSPGT.

Interacts with CD99. Phosphorylated on tyrosine residues.

The protein resides in the membrane. In terms of biological role, paired receptors consist of highly related activating and inhibitory receptors and are widely involved in the regulation of the immune system. Receptor for CD99 and PIANP. In Mus musculus (Mouse), this protein is Paired immunoglobulin-like type 2 receptor alpha (Pilra).